Here is a 173-residue protein sequence, read N- to C-terminus: T-cell receptor beta-1 chain C region (173 aa).

A c region region spans residues 1-146 (EDLRNVTPPK…GVLSATILYE (146 aa)). Cys-31 and Cys-71 form a disulfide bridge. 2 N-linked (GlcNAc...) asparagine glycosylation sites follow: Asn-67 and Asn-116. The helical transmembrane segment at 146–167 (EILLGKATLYAVLVSTLVVMAM) threads the bilayer. Residues 168-173 (VKRKNS) lie on the Cytoplasmic side of the membrane.

The protein localises to the membrane. The protein is T-cell receptor beta-1 chain C region of Mus musculus (Mouse).